Here is a 755-residue protein sequence, read N- to C-terminus: MSASSLLDKQCDHFSTKIVDLIMVDKADELDRRVAAAFSEREASRERRISQISGECNAGLACKRLADGRFPEISAGQRVAVLSAYIYVGEEILRWILEPEASVRTRVSGLVAIDLAPSCMDISRAQLLQTMNLLSGKRCAPSDLSHFVAISISETARSRTLQMAPYEEGSLKSVTGFTVIIEEAVPFDMVAYGRNLMLKASAGSFPTIDLLYDYRLFLDKCSDSGRIGFFPEDVPRPKVAVIGAGISGLVVASELLHAGVDDVTIYEAGDRVGGKLWSHAFKDAPGVVAEMGAMRFPPAASCLFFFLERYGLSSMRPFPNPGTVDTDLVYEGCRYMWKAGQQPPKLFHRVYSGWHAFLKDGFLEGDIVLASPDAITEALKSGDIRRAHDSWQIWLNRFGRESFSSAIERIFLGTHPPGGETWSFPHDWDLFKLMGIGSGGFGPVFESGFTEILRLVINGYEENQRMCSEGISELPRRIASQVVNGVSVSQRIRHVQVRAIEKEKTKIKIRLKSGISELYDKVVVTSGLANIQLRHCLTCDTTIFRAPVNQAVDNSHMTGSSKLFLLTERKFWFDHMLPSCVLMDGFAKAVYCLDYEPQDPNGKGLVLISYTWEDDSHKLLAVPDKKERLCLLRDAISKSFPVFAQHLVPACADYDQNVVQHDWLTDENAGGRFKLNRRGEDFYSEELFFQALDTTNDTGVYLAGCSCSFTGGWVEGAIQTACNAVCAIIHNCGGILAKDNPLKHPWKRYNYRNRN.

Residues serine 247, glutamate 267, lysine 275, and arginine 295 each coordinate FMN. Arginine 295 provides a ligand contact to substrate.

This sequence belongs to the tryptophan 2-monooxygenase family. The cofactor is FMN.

It carries out the reaction L-tryptophan + O2 = indole-3-acetamide + CO2 + H2O. It functions in the pathway plant hormone metabolism; auxin biosynthesis. This is Tryptophan 2-monooxygenase (iaaM) from Agrobacterium vitis (Rhizobium vitis).